A 78-amino-acid polypeptide reads, in one-letter code: ATP synthase subunit a (78 aa).

Helical transmembrane passes span 13–33, 35–55, and 57–77; these read LFGNVYAKEMLMILLVGLGTS, FLGAFGAFLPLIVWQAFGMFI, and SLQAFIFAMLAMVYMAHKVEA.

Belongs to the ATPase A chain family. In terms of assembly, F-type ATPases have 2 components, CF(1) - the catalytic core - and CF(0) - the membrane proton channel. CF(1) has five subunits: alpha(3), beta(3), gamma(1), delta(1), epsilon(1). CF(0) has three main subunits: a(1), b(2) and c(9-12). The alpha and beta chains form an alternating ring which encloses part of the gamma chain. CF(1) is attached to CF(0) by a central stalk formed by the gamma and epsilon chains, while a peripheral stalk is formed by the delta and b chains.

It is found in the cell membrane. Functionally, key component of the proton channel; it plays a direct role in the translocation of protons across the membrane. This Alkalihalobacillus alcalophilus (Bacillus alcalophilus) protein is ATP synthase subunit a (atpB).